We begin with the raw amino-acid sequence, 215 residues long: Adenylate kinase (215 aa).

Residue 10-15 (GAGKGT) coordinates ATP. The segment at 30-59 (STGDMFRKAIKEETELGKEAKSYMDRGELV) is NMP. Residues Thr-31, Arg-36, 57–59 (ELV), 85–88 (GFPR), and Gln-92 contribute to the AMP site. The interval 126-163 (GRRICESCGTTYHLVFNPPKVEGICDIDGGKLYQREDD) is LID. Arg-127 is an ATP binding site. Residues Cys-130 and Cys-133 each coordinate Zn(2+). 136–137 (TY) is an ATP binding site. Cys-150 and Asp-153 together coordinate Zn(2+). AMP is bound by residues Arg-160 and Arg-171. ATP is bound at residue Lys-199.

This sequence belongs to the adenylate kinase family. Monomer.

It is found in the cytoplasm. It carries out the reaction AMP + ATP = 2 ADP. The protein operates within purine metabolism; AMP biosynthesis via salvage pathway; AMP from ADP: step 1/1. Its function is as follows. Catalyzes the reversible transfer of the terminal phosphate group between ATP and AMP. Plays an important role in cellular energy homeostasis and in adenine nucleotide metabolism. The protein is Adenylate kinase of Staphylococcus aureus (strain COL).